A 325-amino-acid polypeptide reads, in one-letter code: Bifunctional nuclease 2 (325 aa).

Residues 119 to 254 (CVHNNSQGRN…SLAYSDGIRS (136 aa)) enclose the BFN domain. One can recognise a UVR domain in the interval 285-320 (EAQEFGLIRNMLIAAVEERYKDAATWRDKLMLLRSK).

This sequence belongs to the bifunctional nuclease family.

It localises to the nucleus. Bifunctional nuclease with both RNase and DNase activities. Involved in basal defense response. Participates in abscisic acid-derived callose deposition following infection by a necrotrophic pathogen. The sequence is that of Bifunctional nuclease 2 (BBD2) from Oryza sativa subsp. japonica (Rice).